Consider the following 63-residue polypeptide: Large ribosomal subunit protein bL32 (63 aa).

The disordered stretch occupies residues 1 to 27 (MANPKAKMSKSRRDKRRAQFNARTKPV). The span at 7–18 (KMSKSRRDKRRA) shows a compositional bias: basic residues.

This sequence belongs to the bacterial ribosomal protein bL32 family.

This is Large ribosomal subunit protein bL32 from Chlorobium phaeobacteroides (strain DSM 266 / SMG 266 / 2430).